A 353-amino-acid chain; its full sequence is Virulence plasmid protein pGP2-D (353 aa).

This chain is Virulence plasmid protein pGP2-D, found in Chlamydia muridarum (strain MoPn / Nigg).